We begin with the raw amino-acid sequence, 164 residues long: Cyclic pyranopterin monophosphate synthase (164 aa).

Substrate contacts are provided by residues 75–77 and 112–113; these read MAH and ME. The active site involves D127.

This sequence belongs to the MoaC family. In terms of assembly, homohexamer; trimer of dimers.

It catalyses the reaction (8S)-3',8-cyclo-7,8-dihydroguanosine 5'-triphosphate = cyclic pyranopterin phosphate + diphosphate. The protein operates within cofactor biosynthesis; molybdopterin biosynthesis. Its function is as follows. Catalyzes the conversion of (8S)-3',8-cyclo-7,8-dihydroguanosine 5'-triphosphate to cyclic pyranopterin monophosphate (cPMP). The protein is Cyclic pyranopterin monophosphate synthase of Desulforamulus reducens (strain ATCC BAA-1160 / DSM 100696 / MI-1) (Desulfotomaculum reducens).